The chain runs to 1392 residues: DNA-directed RNA polymerase subunit beta (1392 aa).

The protein belongs to the RNA polymerase beta chain family. In terms of assembly, the RNAP catalytic core consists of 2 alpha, 1 beta, 1 beta' and 1 omega subunit. When a sigma factor is associated with the core the holoenzyme is formed, which can initiate transcription.

The catalysed reaction is RNA(n) + a ribonucleoside 5'-triphosphate = RNA(n+1) + diphosphate. In terms of biological role, DNA-dependent RNA polymerase catalyzes the transcription of DNA into RNA using the four ribonucleoside triphosphates as substrates. In Neisseria gonorrhoeae (strain NCCP11945), this protein is DNA-directed RNA polymerase subunit beta.